The sequence spans 227 residues: Eukaryotic translation initiation factor 4E-1 (227 aa).

A disordered region spans residues 1 to 52 (MAEEHETRPPSAGRPPSSGRGRADDADEREEGEIADDDSGHAPPQANPAAPH). Over residues 9–20 (PPSAGRPPSSGR) the composition is skewed to low complexity. Residues 25 to 37 (DADEREEGEIADD) are compositionally biased toward acidic residues. 2 EIF4G-binding regions span residues 52–55 (HPLE) and 62–98 (FDNP…NNIH). MRNA is bound by residues 70 to 75 (KQATWG), Lys102, and 120 to 121 (WE). Cys125 and Cys163 are joined by a disulfide. The segment at 146 to 155 (HTLLAMIGEQ) is EIF4G-binding. Residues 170–175 (RGKQER) and 215–219 (KKMDK) contribute to the mRNA site.

Belongs to the eukaryotic initiation factor 4E family. In terms of assembly, EIF4F is a multi-subunit complex, the composition of which varies with external and internal environmental conditions. It is composed of at least EIF4A, EIF4E and EIF4G. EIF4E is also known to interact with other partners. In higher plants two isoforms of EIF4F have been identified, named isoform EIF4F and isoform EIF(iso)4F. Isoform EIF4F has subunits p220 and p26, whereas isoform EIF(iso)4F has subunits p82 and p28. Post-translationally, according to the redox status, the Cys-125-Cys-163 disulfide bridge may have a role in regulating protein function by affecting its ability to bind capped mRNA.

Its subcellular location is the nucleus. It is found in the cytoplasm. Its function is as follows. Component of the protein complex eIF4F, which is involved in the recognition of the mRNA cap, ATP-dependent unwinding of 5'-terminal secondary structure and recruitment of mRNA to the ribosome. Recognizes and binds the 7-methylguanosine-containing mRNA cap during an early step in the initiation of protein synthesis and facilitates ribosome binding by inducing the unwinding of the mRNAs secondary structures. In Oryza sativa subsp. japonica (Rice), this protein is Eukaryotic translation initiation factor 4E-1.